A 378-amino-acid polypeptide reads, in one-letter code: Deoxyguanosinetriphosphate triphosphohydrolase-like protein (378 aa).

Residues M1–F28 form a disordered region. The region spanning R62 to S198 is the HD domain.

The protein belongs to the dGTPase family. Type 2 subfamily.

This is Deoxyguanosinetriphosphate triphosphohydrolase-like protein from Cereibacter sphaeroides (strain ATCC 17029 / ATH 2.4.9) (Rhodobacter sphaeroides).